We begin with the raw amino-acid sequence, 118 residues long: Large ribosomal subunit protein uL18 (118 aa).

Belongs to the universal ribosomal protein uL18 family. In terms of assembly, part of the 50S ribosomal subunit; part of the 5S rRNA/L5/L18/L25 subcomplex. Contacts the 5S and 23S rRNAs.

This is one of the proteins that bind and probably mediate the attachment of the 5S RNA into the large ribosomal subunit, where it forms part of the central protuberance. The sequence is that of Large ribosomal subunit protein uL18 from Sulfurimonas denitrificans (strain ATCC 33889 / DSM 1251) (Thiomicrospira denitrificans (strain ATCC 33889 / DSM 1251)).